The chain runs to 309 residues: Porphobilinogen deaminase (309 aa).

At C244 the chain carries S-(dipyrrolylmethanemethyl)cysteine.

It belongs to the HMBS family. In terms of assembly, monomer. Dipyrromethane serves as cofactor.

It carries out the reaction 4 porphobilinogen + H2O = hydroxymethylbilane + 4 NH4(+). Its pathway is porphyrin-containing compound metabolism; protoporphyrin-IX biosynthesis; coproporphyrinogen-III from 5-aminolevulinate: step 2/4. Functionally, tetrapolymerization of the monopyrrole PBG into the hydroxymethylbilane pre-uroporphyrinogen in several discrete steps. The protein is Porphobilinogen deaminase of Listeria innocua serovar 6a (strain ATCC BAA-680 / CLIP 11262).